A 145-amino-acid polypeptide reads, in one-letter code: Large ribosomal subunit protein uL24 (145 aa).

Disordered regions lie at residues 1–21 and 122–145; these read MKFN…HFNA and KAKS…KMQE. Residue Lys136 forms a Glycyl lysine isopeptide (Lys-Gly) (interchain with G-Cter in SUMO2) linkage. Phosphothreonine is present on Thr139.

This sequence belongs to the universal ribosomal protein uL24 family. As to quaternary structure, component of the large ribosomal subunit. Interacts with DHX33. In terms of processing, ufmylated by UFL1 in response to endoplasmic reticulum stress, promoting reticulophagy of endoplasmic reticulum sheets.

The protein localises to the cytoplasm. Functionally, component of the large ribosomal subunit. The ribosome is a large ribonucleoprotein complex responsible for the synthesis of proteins in the cell. The polypeptide is Large ribosomal subunit protein uL24 (RPL26) (Bos taurus (Bovine)).